The sequence spans 182 residues: Inner membrane-spanning protein YciB (182 aa).

A run of 5 helical transmembrane segments spans residues 20-42 (GGIYQATIVAMVATIVQILWVYY), 55-75 (LIMIMVFGSLTIFLHDSTFIL), 76-96 (LKPTALYWLFSGVLFVSAQFF), 123-143 (LNLAWSAFFFFMGFLNLYIAF), and 153-173 (FKLFGSTGLLIAFVIAQGFWM).

Belongs to the YciB family.

The protein localises to the cell inner membrane. Plays a role in cell envelope biogenesis, maintenance of cell envelope integrity and membrane homeostasis. The protein is Inner membrane-spanning protein YciB of Polynucleobacter asymbioticus (strain DSM 18221 / CIP 109841 / QLW-P1DMWA-1) (Polynucleobacter necessarius subsp. asymbioticus).